Reading from the N-terminus, the 675-residue chain is Pescadillo homolog (675 aa).

Residues 309–331 form a disordered region; sequence AGLDEAKEEPAAETTEESSETID. A BRCT domain is found at 352–471; it reads EAGSLFAPFT…RLVRPDLYAP (120 aa). Positions 475-675 are disordered; sequence LPPHLSPWVK…RRKLEKGAAK (201 aa). A compositionally biased stretch (acidic residues) spans 498–518; sequence EQEEEGEAELDEDSDEEMEEA. Residues 519-530 are compositionally biased toward basic and acidic residues; the sequence is TSDKKAEAKADV. Acidic residues-rich tracts occupy residues 532-541 and 549-580; these read SESEDEDESV and GTDD…DEEE. Residues 551–675 adopt a coiled-coil conformation; it reads DDDESESEDE…RRKLEKGAAK (125 aa). Positions 581–591 are enriched in basic and acidic residues; it reads AARTQHQKELE. Residues 611 to 623 are compositionally biased toward basic residues; it reads KKASQAKKIAAKK. Residues 624-634 show a composition bias toward basic and acidic residues; it reads RKEEEELERQK.

Belongs to the pescadillo family. As to quaternary structure, component of the NOP7 complex, composed of erb1, nop7 and ytm1. The complex is held together by erb1, which interacts with nop7 via its N-terminal domain and with ytm1 via a high-affinity interaction between the seven-bladed beta-propeller domains of the 2 proteins. The NOP7 complex associates with the 66S pre-ribosome.

The protein localises to the nucleus. The protein resides in the nucleolus. It localises to the nucleoplasm. Functionally, component of the NOP7 complex, which is required for maturation of the 25S and 5.8S ribosomal RNAs and formation of the 60S ribosome. The polypeptide is Pescadillo homolog (nop7) (Aspergillus fumigatus (strain CBS 144.89 / FGSC A1163 / CEA10) (Neosartorya fumigata)).